The following is a 516-amino-acid chain: GMP synthase [glutamine-hydrolyzing] (516 aa).

The Glutamine amidotransferase type-1 domain maps to 6 to 199 (KVLILDFGSQ…LFEIAGLTSG (194 aa)). Cys-83 acts as the Nucleophile in catalysis. Residues His-173 and Glu-175 contribute to the active site. The region spanning 200-391 (WTMSSFLETE…LGMPDFIIWR (192 aa)) is the GMPS ATP-PPase domain. ATP is bound at residue 227–233 (SGGVDST).

Homodimer.

It catalyses the reaction XMP + L-glutamine + ATP + H2O = GMP + L-glutamate + AMP + diphosphate + 2 H(+). Its pathway is purine metabolism; GMP biosynthesis; GMP from XMP (L-Gln route): step 1/1. In terms of biological role, catalyzes the synthesis of GMP from XMP. In Solidesulfovibrio magneticus (strain ATCC 700980 / DSM 13731 / RS-1) (Desulfovibrio magneticus), this protein is GMP synthase [glutamine-hydrolyzing].